A 544-amino-acid chain; its full sequence is Probable protein kinase UbiB (544 aa).

The 379-residue stretch at 123–501 folds into the Protein kinase domain; the sequence is DFDIKPLASA…KRQQAKGQFL (379 aa). Residues 129-137 and Lys-152 each bind ATP; that span reads LASASIAQV. Asp-287 functions as the Proton acceptor in the catalytic mechanism. A helical membrane pass occupies residues 515–537; the sequence is LLTSNITVLASISAATGAAFWLF.

The protein belongs to the ABC1 family. UbiB subfamily.

It is found in the cell inner membrane. Its pathway is cofactor biosynthesis; ubiquinone biosynthesis [regulation]. In terms of biological role, is probably a protein kinase regulator of UbiI activity which is involved in aerobic coenzyme Q (ubiquinone) biosynthesis. The sequence is that of Probable protein kinase UbiB from Aliivibrio fischeri (strain MJ11) (Vibrio fischeri).